We begin with the raw amino-acid sequence, 520 residues long: Sodium-dependent dicarboxylate transporter SdcS (520 aa).

14 helical membrane passes run 30 to 50, 55 to 75, 77 to 97, 104 to 124, 160 to 180, 207 to 227, 242 to 262, 298 to 318, 323 to 343, 362 to 382, 399 to 419, 428 to 448, 452 to 472, and 491 to 511; these read AGQL…LLFF, LPWK…WWIT, AIPI…GHIL, SEYG…AIAM, SMFV…LAII, IGYA…PLII, FAKW…ITWL, KVVQ…EFLL, VTSS…LFII, ELPW…KGIS, GVSP…LTEV, MILP…LLLM, AMAA…AIIF, and LISA…VLGI.

This sequence belongs to the SLC13A/DASS transporter (TC 2.A.47) family. NADC subfamily.

The protein localises to the cell membrane. In terms of biological role, mediates the transport of the dicarboxylates fumarate, malate, and succinate across the cytoplasmic membrane via a Na(+)-electrochemical gradient. This chain is Sodium-dependent dicarboxylate transporter SdcS (sdcS), found in Staphylococcus aureus (strain NCTC 8325 / PS 47).